A 422-amino-acid polypeptide reads, in one-letter code: Serine--tRNA ligase (422 aa).

229–231 provides a ligand contact to L-serine; sequence TAE. ATP-binding positions include 260-262 and Val276; that span reads RRE. Residue Glu283 coordinates L-serine. An ATP-binding site is contributed by 349–352; that stretch reads EVTS. An L-serine-binding site is contributed by Thr384.

It belongs to the class-II aminoacyl-tRNA synthetase family. Type-1 seryl-tRNA synthetase subfamily. As to quaternary structure, homodimer. The tRNA molecule binds across the dimer.

The protein resides in the cytoplasm. The catalysed reaction is tRNA(Ser) + L-serine + ATP = L-seryl-tRNA(Ser) + AMP + diphosphate + H(+). It carries out the reaction tRNA(Sec) + L-serine + ATP = L-seryl-tRNA(Sec) + AMP + diphosphate + H(+). It participates in aminoacyl-tRNA biosynthesis; selenocysteinyl-tRNA(Sec) biosynthesis; L-seryl-tRNA(Sec) from L-serine and tRNA(Sec): step 1/1. Catalyzes the attachment of serine to tRNA(Ser). Is also able to aminoacylate tRNA(Sec) with serine, to form the misacylated tRNA L-seryl-tRNA(Sec), which will be further converted into selenocysteinyl-tRNA(Sec). This chain is Serine--tRNA ligase, found in Treponema denticola (strain ATCC 35405 / DSM 14222 / CIP 103919 / JCM 8153 / KCTC 15104).